A 120-amino-acid chain; its full sequence is Large ribosomal subunit protein uL24 (120 aa).

This sequence belongs to the universal ribosomal protein uL24 family. Part of the 50S ribosomal subunit.

In terms of biological role, one of two assembly initiator proteins, it binds directly to the 5'-end of the 23S rRNA, where it nucleates assembly of the 50S subunit. One of the proteins that surrounds the polypeptide exit tunnel on the outside of the subunit. In Pseudarthrobacter chlorophenolicus (strain ATCC 700700 / DSM 12829 / CIP 107037 / JCM 12360 / KCTC 9906 / NCIMB 13794 / A6) (Arthrobacter chlorophenolicus), this protein is Large ribosomal subunit protein uL24.